Consider the following 549-residue polypeptide: Adhesion G protein-coupled receptor G3 (549 aa).

A signal peptide spans 1 to 20; sequence MATPRGLGALLLLLLLPTSG. At 21–270 the chain is on the extracellular side; sequence QEKPTEGPRN…DQSTVHILTR (250 aa). 3 N-linked (GlcNAc...) asparagine glycosylation sites follow: N98, N144, and N210. The GAIN-B domain occupies 107–262; sequence FYFSLEPSQV…ALLLRPTLDQ (156 aa). 2 cysteine pairs are disulfide-bonded: C215–C244 and C233–C246. Positions 215–262 are GPS; the sequence is CVFWDVTKGTTGDWSSEGCSTEVRPEGTVCCCDHLTFFALLLRPTLDQ. The stachel stretch occupies residues 251–259; that stretch reads FFALLLRPT. A helical membrane pass occupies residues 271–295; that stretch reads ISQAGCGVSMIFLAFTIILYAFLRL. The Cytoplasmic portion of the chain corresponds to 296–304; that stretch reads SRERFKSED. A helical transmembrane segment spans residues 305–326; it reads APKIHVALGGSLFLLNLAFLVN. At 327-338 the chain is on the extracellular side; sequence VGSGSKGSDAAC. Residues C338 and C420 are joined by a disulfide bond. A helical membrane pass occupies residues 339 to 364; the sequence is WARGAVFHYFLLCAFTWMGLEAFHLY. Over 365–378 the chain is Cytoplasmic; sequence LLAVRVFNTYFGHY. The chain crosses the membrane as a helical span at residues 379 to 400; that stretch reads FLKLSLVGWGLPALMVIGTGSA. Residues 401–428 are Extracellular-facing; the sequence is NSYGLYTIRDRENRTSLELCWFREGTTM. A glycan (N-linked (GlcNAc...) asparagine) is linked at N413. The chain crosses the membrane as a helical span at residues 429-454; sequence YALYITVHGYFLITFLFGMVVLALVV. Residues 455–474 lie on the Cytoplasmic side of the membrane; the sequence is WKIFTLSRATAVKERGKNRK. The helical transmembrane segment at 475 to 495 threads the bilayer; that stretch reads KVLTLLGLSSLVGVTWGLAIF. The Extracellular portion of the chain corresponds to 496 to 501; sequence TPLGLS. The chain crosses the membrane as a helical span at residues 502–525; it reads TVYIFALFNSLQGVFICCWFTILY. Residue N510 participates in cortisol binding. Topologically, residues 526-549 are cytoplasmic; that stretch reads LPSQSTTVSSSTARLDQAHSASQE.

It belongs to the G-protein coupled receptor 2 family. Adhesion G-protein coupled receptor (ADGR) subfamily. Heterodimer of 2 chains generated by proteolytic processing; the large extracellular N-terminal fragment and the membrane-bound C-terminal fragment predominantly remain associated and non-covalently linked. Interacts with PRTN3; this interaction induces the activation of PAR2. Interacts with GNAO1 (when palmitoylated). Post-translationally, autoproteolytically processed at the GPS region of the GAIN-B domain; this cleavage modulates receptor activity. In terms of processing, O- and N-glycosylated. Expressed in cultured primary dermal lymphatic endothelial cells. Highly expressed in polymorphonuclear cells (PMNs) including neutrophilic, eosinophilic, and basophilic granulocytes.

It localises to the cell membrane. Forms a heterodimer of 2 chains generated by proteolytic processing that remain associated through non-covalent interactions mediated by the GAIN-B domain. In the inactivated receptor, the Stachel sequence (also named stalk) is embedded in the GAIN-B domain, where it adopts a beta-strand conformation. On activation, the Stachel moves into the 7 transmembrane region and adopts a twisted hook-shaped configuration that forms contacts within the receptor, leading to coupling of a G-alpha protein, which activates signaling. The cleaved GAIN-B and N-terminal domains can then dissociate from the rest of the receptor. Its function is as follows. Adhesion G-protein coupled receptor (aGPCR) for glucocorticoid hormones such as cortisol, cortisone and 11-deoxycortisol. Ligand binding causes a conformation change that triggers signaling via guanine nucleotide-binding proteins (G proteins) and modulates the activity of downstream effectors, such as adenylate cyclase. ADGRG3/GPR97 is coupled to G(o)/GNAO1 G proteins and mediates signaling by inhibiting adenylate cyclase activity. May also signal through G-alpha(q)-proteins; additional evidence are however required to confirm this result in vivo. Plays a role in the regulation of various processes including B-cell development, inflammation or innate immunity. Regulates migration of lymphatic endothelial cells in vitro via the small GTPases RhoA and CDC42. Antibody ligation leads to the production and activation of antimicrobial mediators like reactive oxygen species (ROS) and myeloperoxidase (MPO) as well as enhanced bacteria uptake and killing by granulocytes. Additionally, collaborates with protease-activated receptor 2/PAR2 to stimulate neutrophil-driven antimicrobial responses and endothelial cell activation. This is Adhesion G protein-coupled receptor G3 from Homo sapiens (Human).